The chain runs to 445 residues: Lipid A 1-phosphatase (445 aa).

An N-terminal signal peptide occupies residues 1–22 (MNRESFLLLLVLLFALPLHLQA).

The protein resides in the periplasm. The protein operates within bacterial outer membrane biogenesis; LPS lipid A biosynthesis. In terms of biological role, removes the 1-phosphate group from lipid A species. Absence of phosphate groups in lipid A renders the bacteria resistant to host-derived cationic antimicrobial peptides (CAMP) and allowing it to camouflage itself from the host innate immune response. This Porphyromonas gingivalis (strain ATCC 33277 / DSM 20709 / CIP 103683 / JCM 12257 / NCTC 11834 / 2561) protein is Lipid A 1-phosphatase.